The following is a 365-amino-acid chain: Glutamate 5-kinase 1 (365 aa).

K9 contacts ATP. The substrate site is built by S49, D136, and N148. Residues 168–169 (TD) and 210–216 (TGGMKSK) each bind ATP. One can recognise a PUA domain in the interval 276-353 (SGEIIIDAGA…DELDFEKTFE (78 aa)).

The protein belongs to the glutamate 5-kinase family.

The protein localises to the cytoplasm. It carries out the reaction L-glutamate + ATP = L-glutamyl 5-phosphate + ADP. The protein operates within amino-acid biosynthesis; L-proline biosynthesis; L-glutamate 5-semialdehyde from L-glutamate: step 1/2. Its function is as follows. Catalyzes the transfer of a phosphate group to glutamate to form L-glutamate 5-phosphate. The protein is Glutamate 5-kinase 1 of Bacillus subtilis (strain 168).